A 469-amino-acid chain; its full sequence is Glutamine synthetase (469 aa).

One can recognise a GS beta-grasp domain in the interval 14-98 (NDVKYVDLRF…VVCDVLEPTT (85 aa)). One can recognise a GS catalytic domain in the interval 106–469 (PRGIAKKAMA…PVEFEMYYSV (364 aa)). The Mg(2+) site is built by E131 and E133. E209 is an ATP binding site. E214 and E221 together coordinate Mg(2+). L-glutamate-binding positions include 265 to 266 (NG) and G266. A Mg(2+)-binding site is contributed by H270. ATP-binding positions include 272 to 274 (HQS) and S274. R322, E328, and R340 together coordinate L-glutamate. 3 residues coordinate ATP: R340, R345, and K353. E358 is a binding site for Mg(2+). Position 360 (R360) interacts with L-glutamate. Y398 carries the O-AMP-tyrosine modification.

It belongs to the glutamine synthetase family. Oligomer of 12 subunits arranged in the form of two hexameric ring. The cofactor is Mg(2+).

It localises to the cytoplasm. It catalyses the reaction L-glutamate + NH4(+) + ATP = L-glutamine + ADP + phosphate + H(+). Its activity is regulated as follows. The activity of this enzyme could be controlled by adenylation under conditions of abundant glutamine. Its function is as follows. Catalyzes the ATP-dependent biosynthesis of glutamine from glutamate and ammonia. This Azorhizobium caulinodans (strain ATCC 43989 / DSM 5975 / JCM 20966 / LMG 6465 / NBRC 14845 / NCIMB 13405 / ORS 571) protein is Glutamine synthetase.